We begin with the raw amino-acid sequence, 202 residues long: Hypoxanthine-guanine phosphoribosyltransferase (202 aa).

Diphosphate is bound by residues lysine 66 and glycine 67. Mg(2+) is bound by residues glutamate 122 and aspartate 123. The active-site Proton acceptor is aspartate 126. Residues lysine 154, 175-176 (FV), and aspartate 182 each bind GMP. Arginine 188 is a binding site for diphosphate.

This sequence belongs to the purine/pyrimidine phosphoribosyltransferase family. As to quaternary structure, homodimer and homotetramer in equilibrium. The presence or absence of divalent metal ions, as well as phosphate, can affect the oligomerization state of the enzyme. Likely functions as a tetramer (rather than a dimer) in its biological environment, which is the most active form. The dimeric structure is also active though ~50% of that of the tetramer. Requires Mg(2+) as cofactor.

The protein resides in the cytoplasm. The enzyme catalyses IMP + diphosphate = hypoxanthine + 5-phospho-alpha-D-ribose 1-diphosphate. It catalyses the reaction GMP + diphosphate = guanine + 5-phospho-alpha-D-ribose 1-diphosphate. The protein operates within purine metabolism; IMP biosynthesis via salvage pathway; IMP from hypoxanthine: step 1/1. It participates in purine metabolism; GMP biosynthesis via salvage pathway; GMP from guanine: step 1/1. Its activity is regulated as follows. Competitively inhibited by acyclic nucleoside phosphonates (ANPs) with Ki values as low as 0.69 uM. Prodrugs of these compounds arrest the growth of a virulent strain of M.tuberculosis with MIC50 values as low as 4.5 uM and possess low cytotoxicity in mammalian cells. Inhibited by pyrrolidine nucleoside bisphosphonates, which are also able to arrest the growth of virulent M.tuberculosis not only in its replicating phase but also in its latent phase, and to arrest the growth of M.tuberculosis in infected macrophages while having low cytotoxicity in mammalian cells. Functionally, purine salvage pathway enzyme that catalyzes the transfer of the ribosyl-5-phosphate group from 5-phospho-alpha-D-ribose 1-diphosphate (PRPP) to the N9 position of the 6-oxopurines hypoxanthine and guanine to form the corresponding ribonucleotides IMP (inosine 5'-monophosphate) and GMP (guanosine 5'-monophosphate), with the release of PPi. Thus, specifically recycles hypoxanthine and guanine imported from the external medium, and converts them to IMP and GMP, respectively. Cannot use xanthine as substrate. In Mycobacterium tuberculosis (strain ATCC 25618 / H37Rv), this protein is Hypoxanthine-guanine phosphoribosyltransferase.